A 609-amino-acid polypeptide reads, in one-letter code: MTDSFNATQFLKTVSSSAGVYRMYDAQGVVIYVGKAKDLKKRLSSYFRRNLPNVKTQALVSHIANIDVTLTPSETDALILENDYIKQYMPRYNVLLRDDKSYPYIFLSGHRHPRLAYHRGPQREKGHYFGPYPNGGAVRESLHLMQKLFPIRQCDDLYYKARSRPCLQYQIARCSAPCVGKISDEDYAEQVKLASLFLRGKDQQVIATLVGKMEQAAMDLNYEDAARYRDQISALRRVAEQQEVSSDSGDMDVIGAYYASGIACFHLLFIRNGKIFGSRSYYPSVPDETEVSEVLRAFMLQFYLNVDSQRTLPREIVVSHEFEDIHELEEAIAQASNRRLLIKTKVRSERASFLRIADANAKNAVETRLSHQNTVEERFLLLEEALEQSQAINRMECFDISHTMGESTVASCVVFNREGPSKGEYRRYNISGITPGDDYAAMKQAIGRRFDKIEADGKIPDILFIDGGMGQLRIAQKVVNEKFAHLDVAPTLIGVAKGEGRKPGLETLIYGENEVAFSLPADSGALHLIQHIRDESHRFAITGHRNKRQKTRNTSTLESIPGVGPKRRKALLQYLGGLQQVKGASVAQLSKVPGISLEMAQTIHDALRG.

The region spanning 16-94 (SSAGVYRMYD…IKQYMPRYNV (79 aa)) is the GIY-YIG domain. One can recognise a UVR domain in the interval 203–238 (QQVIATLVGKMEQAAMDLNYEDAARYRDQISALRRV).

The protein belongs to the UvrC family. In terms of assembly, interacts with UvrB in an incision complex.

Its subcellular location is the cytoplasm. Its function is as follows. The UvrABC repair system catalyzes the recognition and processing of DNA lesions. UvrC both incises the 5' and 3' sides of the lesion. The N-terminal half is responsible for the 3' incision and the C-terminal half is responsible for the 5' incision. The polypeptide is UvrABC system protein C (Shewanella loihica (strain ATCC BAA-1088 / PV-4)).